A 225-amino-acid polypeptide reads, in one-letter code: Rho GDP-dissociation inhibitor 3 (225 aa).

It belongs to the Rho GDI family. As to expression, detected only in brain, lung, kidney and testis.

The protein resides in the cytoplasm. Functionally, inhibits GDP/GTP exchange reaction of RhoB. Interacts specifically with the GDP- and GTP-bound forms of post-translationally processed Rhob and Rhog proteins, both of which show a growth-regulated expression in mammalian cells. Stimulates the release of the GDP-bound but not the GTP-bound RhoB protein. Also inhibits the GDP/GTP exchange of RhoB but shows less ability to inhibit the dissociation of prebound GTP. The polypeptide is Rho GDP-dissociation inhibitor 3 (Arhgdig) (Mus musculus (Mouse)).